A 172-amino-acid chain; its full sequence is Envelope protein UL45 (172 aa).

The Intravirion portion of the chain corresponds to 1 to 27; it reads MAFRASGPAYQPLAPAASPARARVPAV. A helical; Signal-anchor for type II membrane protein membrane pass occupies residues 28–48; it reads AWIGVGAIVGAFALVAALVLV. The Virion surface segment spans residues 49–172; it reads PPRSSWGLSP…TSIRNALGLP (124 aa).

This sequence belongs to the herpesviridae HHV-1 UL45 family.

It is found in the virion membrane. Functionally, important virulence factor of HSV neurotropism. Seems to be required for glycoprotein B-induced fusion. Dispensable for growth in vitro. This Homo sapiens (Human) protein is Envelope protein UL45.